The chain runs to 61 residues: Large ribosomal subunit protein uL30 (61 aa).

Belongs to the universal ribosomal protein uL30 family. Part of the 50S ribosomal subunit.

The sequence is that of Large ribosomal subunit protein uL30 from Treponema pallidum subsp. pallidum (strain SS14).